The chain runs to 48 residues: Large ribosomal subunit protein bL36c (48 aa).

The protein belongs to the bacterial ribosomal protein bL36 family.

The protein resides in the plastid. Its subcellular location is the chloroplast. The sequence is that of Large ribosomal subunit protein bL36c (rpl36) from Guillardia theta (Cryptophyte).